The primary structure comprises 125 residues: Glutamyl-tRNA(Gln) amidotransferase subunit C, mitochondrial (125 aa).

It belongs to the GatC family. In terms of assembly, subunit of the heterotrimeric GatCAB amidotransferase (AdT) complex, composed of A, B and C subunits.

Its subcellular location is the mitochondrion. It carries out the reaction L-glutamyl-tRNA(Gln) + L-glutamine + ATP + H2O = L-glutaminyl-tRNA(Gln) + L-glutamate + ADP + phosphate + H(+). In terms of biological role, allows the formation of correctly charged Gln-tRNA(Gln) through the transamidation of misacylated Glu-tRNA(Gln) in the mitochondria. The reaction takes place in the presence of glutamine and ATP through an activated gamma-phospho-Glu-tRNA(Gln). In Drosophila mojavensis (Fruit fly), this protein is Glutamyl-tRNA(Gln) amidotransferase subunit C, mitochondrial.